Here is a 487-residue protein sequence, read N- to C-terminus: Betaine aldehyde dehydrogenase (487 aa).

2 residues coordinate K(+): isoleucine 27 and aspartate 93. Position 149 to 151 (149 to 151 (GAW)) interacts with NAD(+). The active-site Charge relay system is the lysine 161. NAD(+)-binding positions include 175–178 (KPSE) and 228–231 (SVPT). The active-site Proton acceptor is glutamate 249. Positions 251, 283, and 384 each coordinate NAD(+). Residue cysteine 283 is the Nucleophile of the active site. Cysteine 283 carries the post-translational modification Cysteine sulfenic acid (-SOH). Residues lysine 454 and glycine 457 each coordinate K(+). The active-site Charge relay system is glutamate 461.

It belongs to the aldehyde dehydrogenase family. In terms of assembly, dimer of dimers. Requires K(+) as cofactor.

The catalysed reaction is betaine aldehyde + NAD(+) + H2O = glycine betaine + NADH + 2 H(+). It functions in the pathway amine and polyamine biosynthesis; betaine biosynthesis via choline pathway; betaine from betaine aldehyde: step 1/1. Its function is as follows. Involved in the biosynthesis of the osmoprotectant glycine betaine. Catalyzes the irreversible oxidation of betaine aldehyde to the corresponding acid. This is Betaine aldehyde dehydrogenase from Mesorhizobium japonicum (strain LMG 29417 / CECT 9101 / MAFF 303099) (Mesorhizobium loti (strain MAFF 303099)).